Consider the following 357-residue polypeptide: DNA replication and repair protein RecF (357 aa).

30–37 (GANGSGKT) contacts ATP.

The protein belongs to the RecF family.

It localises to the cytoplasm. Functionally, the RecF protein is involved in DNA metabolism; it is required for DNA replication and normal SOS inducibility. RecF binds preferentially to single-stranded, linear DNA. It also seems to bind ATP. The protein is DNA replication and repair protein RecF of Shigella dysenteriae serotype 1 (strain Sd197).